Reading from the N-terminus, the 105-residue chain is Flower-specific defensin (105 aa).

An N-terminal signal peptide occupies residues 1–25 (MARSLCFMAFAILAMMLFVAYEVQA). Intrachain disulfides connect Cys-28-Cys-72, Cys-39-Cys-59, Cys-45-Cys-66, and Cys-49-Cys-68. Residues 73–105 (VFDEKMTKTGAEILAEEAKTLAAALLEEEIMDN) constitute a propeptide, removed in mature form.

Belongs to the DEFL family. Most abundant in the epidermal cell layers of the petals and sepals, within the connective cells of the anthers, and the cortical cells of the style. Not detected in the tapetum, pollen mother cells, the transmitting tissue, the vascular bundles of the anther and style or in leaves. Expressed also in ovaries, but barley detectable in roots.

It is found in the secreted. The protein resides in the vacuole. Plant defense peptide with antifungal activity against F.oxysporum and B.cinerea. Retards the growth of the Lepidopteran insect pests H.armigera and H.punctigera. The polypeptide is Flower-specific defensin (D1) (Nicotiana alata (Winged tobacco)).